A 324-amino-acid chain; its full sequence is D-alanine--D-alanine ligase (324 aa).

The 203-residue stretch at 120 to 322 folds into the ATP-grasp domain; sequence NNYLRGFGVE…LKEILTEIIE (203 aa). 149–204 contributes to the ATP binding site; that stretch reads IDKLGLPLIVKPNDGGSSFGVTKVTNITQIQLAIRNAFNEGEGVLIESFIPGTEIT. The Mg(2+) site is built by D276, E289, and N291.

The protein belongs to the D-alanine--D-alanine ligase family. It depends on Mg(2+) as a cofactor. Mn(2+) is required as a cofactor.

Its subcellular location is the cytoplasm. The catalysed reaction is 2 D-alanine + ATP = D-alanyl-D-alanine + ADP + phosphate + H(+). It participates in cell wall biogenesis; peptidoglycan biosynthesis. Cell wall formation. The polypeptide is D-alanine--D-alanine ligase (Azobacteroides pseudotrichonymphae genomovar. CFP2).